The chain runs to 418 residues: ML-236A carboxylate methylbutanoyltransferase mlcH (418 aa).

Arg-78 contributes to the monacolin J binding site. Catalysis depends on Ser-81, which acts as the Acyl-ester intermediate. Positions 178, 193, and 262 each coordinate monacolin J. 2-methylbutanoate is bound at residue Gly-370.

The protein belongs to the class-A beta-lactamase family.

The catalysed reaction is ML-236A carboxylate + (S)-2-methylbutanoyl-[2-methylbutanoate polyketide synthase] = mevinic carboxylate + holo-[2-methylbutanoate polyketide synthase]. It participates in polyketide biosynthesis. Functionally, compactin diketide synthase; part of the gene cluster that mediates the biosynthesis of compactin, also known as mevastatin or ML-236B, and which acts as a potent competitive inhibitor of HMG-CoA reductase. Compactin biosynthesis is performed in two stages. The first stage is catalyzed by the nonaketide synthase mlcA, which belongs to type I polyketide synthases and catalyzes the iterative nine-step formation of the polyketide. This PKS stage is completed by the action of dehydrogenase mlcG, which catalyzes the NADPH-dependent reduction of the unsaturated tetra-, penta- and heptaketide intermediates that arise during the mlcA-mediated biosynthesis of the nonaketide chain and leads to dihydro-ML-236C carboxylate. Covalently bound dihydro-ML-236C carboxylate is released from mlcA by the mlcF esterase. Conversion of dihydro-ML-236C carboxylate into ML-236A carboxylate is subsequently performed with the participation of molecular oxygen and P450 monoogygenase mlcC. Finally, mlcH performs the conversion of ML-236A carboxylate to ML-236B/compactin carboxylate through the addition of the side-chain diketide moiety produced by the diketide synthase mlcB. The chain is ML-236A carboxylate methylbutanoyltransferase mlcH from Penicillium citrinum.